Consider the following 407-residue polypeptide: ETS domain-containing protein Elk-3 (407 aa).

Residues 5 to 85 (ITLWQFLLQL…IGQKFVYKFV (81 aa)) constitute a DNA-binding region (ETS). Lys92 participates in a covalent cross-link: Glycyl lysine isopeptide (Lys-Gly) (interchain with G-Cter in SUMO2). A Phosphoserine modification is found at Ser115. Residue Lys165 forms a Glycyl lysine isopeptide (Lys-Gly) (interchain with G-Cter in SUMO2) linkage. 2 disordered regions span residues 234 to 253 (SSAS…SPLP) and 271 to 298 (LEPL…KGLE). The CTBP-binding motif signature appears at 273-277 (PLNLS). Ser396 is modified (phosphoserine).

Belongs to the ETS family. As to quaternary structure, interacts with CTBP1.

It is found in the nucleus. May be a negative regulator of transcription, but can activate transcription when coexpressed with Ras, Src or Mos. Forms a ternary complex with the serum response factor and the ETS and SRF motifs of the Fos serum response element. This is ETS domain-containing protein Elk-3 (ELK3) from Homo sapiens (Human).